A 500-amino-acid polypeptide reads, in one-letter code: tRNA nucleotidyltransferase cca1 (500 aa).

Residues 122 to 139 (DYTNSNSSNKLVFGTPLE) are flexible loop. Positions 231–241 (ERIGVEVDKML) match the ERhxxExxxhh motif motif.

It belongs to the tRNA nucleotidyltransferase/poly(A) polymerase family.

It carries out the reaction a tRNA precursor + 2 CTP = a tRNA with a 3' CC end + 2 diphosphate. TRNA nucleotidyltransferase involved in the synthesis of the tRNA CCA terminus. In contrast to what is usually observed in eukaryotes for which one enzyme synthesizes the whole tRNA CCA terminus, in S.pombe, cca1 specifically adds two cytidine residues to a tRNA substrate lacking this sequence while cca2 specifically adds the terminal adenosine residue thereby completing the CCA sequence. The protein is tRNA nucleotidyltransferase cca1 of Schizosaccharomyces pombe (strain 972 / ATCC 24843) (Fission yeast).